The following is a 148-amino-acid chain: Protein RESISTANCE TO POWDERY MILDEW 8.1 (148 aa).

Residues 1–148 (MPIGELAIGA…VISACSKIRA (148 aa)) enclose the RPW8 domain. The helical transmembrane segment at 7–23 (AIGAVLGVGAQAIYDRF) threads the bilayer. A coiled-coil region spans residues 120-140 (DDIKEIKAKISEMDTKLAEVI).

This sequence belongs to the plant RPW8 protein family.

The protein resides in the membrane. In terms of biological role, disease resistance (R) protein that induces localized, salicylic acid-dependent defenses. Confers resistance to powdery mildew (e.g. Erysiphe cichoracearum UCSC1). The chain is Protein RESISTANCE TO POWDERY MILDEW 8.1 from Arabidopsis thaliana (Mouse-ear cress).